The following is a 753-amino-acid chain: Small G protein signaling modulator 3 homolog (753 aa).

The 192-residue stretch at Gly115–Gly306 folds into the Rab-GAP TBC domain. Residues Ser482–Glu541 enclose the SH3 domain. One can recognise an RUN domain in the interval Gly557–Glu720.

Belongs to the small G protein signaling modulator family.

In Xenopus laevis (African clawed frog), this protein is Small G protein signaling modulator 3 homolog (sgsm3).